Here is a 113-residue protein sequence, read N- to C-terminus: Large ribosomal subunit protein uL24 (113 aa).

It belongs to the universal ribosomal protein uL24 family. Part of the 50S ribosomal subunit.

In terms of biological role, one of two assembly initiator proteins, it binds directly to the 5'-end of the 23S rRNA, where it nucleates assembly of the 50S subunit. Functionally, one of the proteins that surrounds the polypeptide exit tunnel on the outside of the subunit. This is Large ribosomal subunit protein uL24 from Chlamydia felis (strain Fe/C-56) (Chlamydophila felis).